The chain runs to 338 residues: Ketol-acid reductoisomerase (NADP(+)) (338 aa).

One can recognise a KARI N-terminal Rossmann domain in the interval 1 to 181 (MRVFYDKDCD…GGGRTGIIET (181 aa)). Residues 24 to 27 (YGSQ), Arg-47, Ser-50, Thr-52, and 82 to 85 (DEFQ) contribute to the NADP(+) site. Residue His-107 is part of the active site. Residue Gly-133 participates in NADP(+) binding. The KARI C-terminal knotted domain maps to 182-327 (TFKDETETDL…EKLRAMMPWI (146 aa)). Mg(2+)-binding residues include Asp-190, Glu-194, Glu-226, and Glu-230. Position 251 (Ser-251) interacts with substrate.

The protein belongs to the ketol-acid reductoisomerase family. It depends on Mg(2+) as a cofactor.

It catalyses the reaction (2R)-2,3-dihydroxy-3-methylbutanoate + NADP(+) = (2S)-2-acetolactate + NADPH + H(+). It carries out the reaction (2R,3R)-2,3-dihydroxy-3-methylpentanoate + NADP(+) = (S)-2-ethyl-2-hydroxy-3-oxobutanoate + NADPH + H(+). It participates in amino-acid biosynthesis; L-isoleucine biosynthesis; L-isoleucine from 2-oxobutanoate: step 2/4. Its pathway is amino-acid biosynthesis; L-valine biosynthesis; L-valine from pyruvate: step 2/4. Involved in the biosynthesis of branched-chain amino acids (BCAA). Catalyzes an alkyl-migration followed by a ketol-acid reduction of (S)-2-acetolactate (S2AL) to yield (R)-2,3-dihydroxy-isovalerate. In the isomerase reaction, S2AL is rearranged via a Mg-dependent methyl migration to produce 3-hydroxy-3-methyl-2-ketobutyrate (HMKB). In the reductase reaction, this 2-ketoacid undergoes a metal-dependent reduction by NADPH to yield (R)-2,3-dihydroxy-isovalerate. This is Ketol-acid reductoisomerase (NADP(+)) from Pseudomonas aeruginosa (strain LESB58).